A 298-amino-acid chain; its full sequence is Arginine/serine-rich protein 1 (298 aa).

The disordered stretch occupies residues 1–135 (MSSAAMSKYV…SRSRSRGRSQ (135 aa)). Position 17 is a phosphoserine (Ser-17). A compositionally biased stretch (low complexity) spans 23-36 (SPSTSGSGRSSRLS). Over residues 60-105 (SRSHSRPRRSRRSRSRSRRRHQRKYRRYSRSYSRSRSRSRSHRYHR) the composition is skewed to basic residues. Phosphoserine occurs at positions 118 and 120. The span at 124–135 (SRSRSRSRGRSQ) shows a compositional bias: basic residues. The residue at position 145 (Arg-145) is an Omega-N-methylarginine. Disordered stretches follow at residues 161–181 (RPRW…TPFR) and 218–298 (ASQG…WIPV). Over residues 219-228 (SQGTAVSSSG) the composition is skewed to polar residues. Residues 230 to 246 (KVEHSEKQTEDATKNTS) show a composition bias toward basic and acidic residues. Residues 247 to 271 (EKSSTQRNIAFSSNNSVAKPLQKTT) are compositionally biased toward polar residues. Over residues 274–289 (AVEEKSSGSPKIDKKK) the composition is skewed to basic and acidic residues. Ser-282 bears the Phosphoserine mark.

It belongs to the RSRP family. Post-translationally, phosphorylated. Phosphorylation at Ser-118 and Ser-120 mediates the interaction with spliceosome proteins.

It is found in the nucleus. In terms of biological role, probably acts as a spliceosomal factor that contributes to spliceosome assembly and regulates the isoform switching of proteins such as PARP6. The chain is Arginine/serine-rich protein 1 (Rsrp1) from Mus musculus (Mouse).